The primary structure comprises 285 residues: Probable endonuclease 4 (285 aa).

The Zn(2+) site is built by histidine 69, histidine 109, glutamate 145, aspartate 179, histidine 182, histidine 216, aspartate 229, histidine 231, and glutamate 261.

The protein belongs to the AP endonuclease 2 family. It depends on Zn(2+) as a cofactor.

It carries out the reaction Endonucleolytic cleavage to 5'-phosphooligonucleotide end-products.. Endonuclease IV plays a role in DNA repair. It cleaves phosphodiester bonds at apurinic or apyrimidinic (AP) sites, generating a 3'-hydroxyl group and a 5'-terminal sugar phosphate. The protein is Probable endonuclease 4 of Salmonella dublin (strain CT_02021853).